Reading from the N-terminus, the 272-residue chain is Rhomboid-type serine protease B (272 aa).

The next 6 helical transmembrane spans lie at 30–50 (LVLL…WSVV), 72–92 (PFIH…TPLL), 103–123 (TAVA…YILV), 133–153 (AVVG…IKTF), 164–184 (TKIP…IFVP), and 186–206 (TSFL…LGYL). The Nucleophile role is filled by Ser138. The active site involves His191.

Belongs to the peptidase S54 family.

It is found in the membrane. It carries out the reaction Cleaves type-1 transmembrane domains using a catalytic dyad composed of serine and histidine that are contributed by different transmembrane domains.. Its function is as follows. Rhomboid protease that catalyzes intramembrane proteolysis. Required for transcription factor srbA activation by mediating its release from the membrane and thereby regulating its activity under hypoxic conditions. Essential for iron homeostasis and resistance to azoles such as voriconazole. Required for virulence in murine models of invasive pulmonary aspergillosis (IPA). The chain is Rhomboid-type serine protease B from Aspergillus fumigatus (strain ATCC MYA-4609 / CBS 101355 / FGSC A1100 / Af293) (Neosartorya fumigata).